A 352-amino-acid polypeptide reads, in one-letter code: Glycerol-1-phosphate dehydrogenase [NAD(P)+] (352 aa).

NAD(+) contacts are provided by residues 98–102 (GKAID) and 120–123 (TAAS). Asp125 lines the substrate pocket. NAD(+) is bound at residue Ser129. Asp172 contributes to the substrate binding site. Residues Asp172 and His252 each contribute to the Zn(2+) site. Residue His256 participates in substrate binding. Position 268 (His268) interacts with Zn(2+).

Belongs to the glycerol-1-phosphate dehydrogenase family. The cofactor is Zn(2+).

It is found in the cytoplasm. The enzyme catalyses sn-glycerol 1-phosphate + NAD(+) = dihydroxyacetone phosphate + NADH + H(+). It catalyses the reaction sn-glycerol 1-phosphate + NADP(+) = dihydroxyacetone phosphate + NADPH + H(+). It functions in the pathway membrane lipid metabolism; glycerophospholipid metabolism. Functionally, catalyzes the NAD(P)H-dependent reduction of dihydroxyacetonephosphate (DHAP or glycerone phosphate) to glycerol 1-phosphate (G1P). The G1P thus generated is used as the glycerophosphate backbone of phospholipids in the cellular membranes of Archaea. This Halobacterium salinarum (strain ATCC 29341 / DSM 671 / R1) protein is Glycerol-1-phosphate dehydrogenase [NAD(P)+].